Consider the following 365-residue polypeptide: Putative tRNA 2'-phosphotransferase (365 aa).

Disordered regions lie at residues 1–35 (MYKNMNSHELIEESNNSGTPATKSSSKPTKKIRPR) and 231–254 (LLDAKASPKNNRSDESDQSDPESI). Residues 17–27 (SGTPATKSSSK) are compositionally biased toward low complexity.

Belongs to the KptA/TPT1 family.

The catalysed reaction is 2'-phospho-[ligated tRNA] + NAD(+) = mature tRNA + ADP-alpha-D-ribose 1'',2''-cyclic phosphate + nicotinamide. Its function is as follows. Catalyzes the last step of tRNA splicing, the transfer of the splice junction 2'-phosphate from ligated tRNA to NAD to produce ADP-ribose 1''-2'' cyclic phosphate. This Schizosaccharomyces pombe (strain 972 / ATCC 24843) (Fission yeast) protein is Putative tRNA 2'-phosphotransferase.